We begin with the raw amino-acid sequence, 459 residues long: Protein phosphatase 1M (459 aa).

Positions Met1–Phe10 are enriched in basic residues. The segment at Met1–Gly64 is disordered. The segment covering Glu14–Ser27 has biased composition (pro residues). A compositionally biased stretch (low complexity) spans Arg38 to Asp48. Mn(2+)-binding residues include Asp125 and Gly126. A PPM-type phosphatase domain is found at Met162–His459.

This sequence belongs to the PP2C family. It depends on Mg(2+) as a cofactor. The cofactor is Mn(2+).

It localises to the nucleus. The enzyme catalyses O-phospho-L-seryl-[protein] + H2O = L-seryl-[protein] + phosphate. The catalysed reaction is O-phospho-L-threonyl-[protein] + H2O = L-threonyl-[protein] + phosphate. This is Protein phosphatase 1M (PPM1M) from Homo sapiens (Human).